Here is a 362-residue protein sequence, read N- to C-terminus: MTKIAFTGGGTVGHVSVNLSLIPIAQERGYEAFYVGSKNGIEREMIESQLPGIQYFPISSGKLRRYISVENIKDVFKVLKGVLDARKVLKKQKPDLLFSKGGFVSVPVVIAARSLNIPVVIHESDITPGLANKISLKFAKKIYTTFEDTLKYLPKEKADFVGATVRDDLKEGNRTNGFQLTGFNDDKKVLLVMGGSLGSKKINELIRQNLDTLLKEYQIIHLTGRGLLDETIQREGYKQFEFVTDELTDLLAITDTVVSRAGANAIYEFLTLNIPMLLIPLGLDQSRGDQIDNAKNFQNKGYAETLPEDQANTTNFIESLHKIESNRSDIEKQMHEYHQLFTKEDLLDKILKDTNQKETRES.

3 residues coordinate UDP-N-acetyl-alpha-D-glucosamine: Arg-166, Ser-196, and Gln-290.

Belongs to the glycosyltransferase 28 family. MurG subfamily.

The protein resides in the cell membrane. The catalysed reaction is Mur2Ac(oyl-L-Ala-gamma-D-Glu-L-Lys-D-Ala-D-Ala)-di-trans,octa-cis-undecaprenyl diphosphate + UDP-N-acetyl-alpha-D-glucosamine = beta-D-GlcNAc-(1-&gt;4)-Mur2Ac(oyl-L-Ala-gamma-D-Glu-L-Lys-D-Ala-D-Ala)-di-trans,octa-cis-undecaprenyl diphosphate + UDP + H(+). The protein operates within cell wall biogenesis; peptidoglycan biosynthesis. In terms of biological role, cell wall formation. Catalyzes the transfer of a GlcNAc subunit on undecaprenyl-pyrophosphoryl-MurNAc-pentapeptide (lipid intermediate I) to form undecaprenyl-pyrophosphoryl-MurNAc-(pentapeptide)GlcNAc (lipid intermediate II). The sequence is that of UDP-N-acetylglucosamine--N-acetylmuramyl-(pentapeptide) pyrophosphoryl-undecaprenol N-acetylglucosamine transferase from Staphylococcus carnosus (strain TM300).